The following is a 279-amino-acid chain: Phage-like element PBSX protein XepA (279 aa).

This sequence to B.subtilis YqxG/YqdC.

Not known; does not seem to be involved in host cell lysis. This chain is Phage-like element PBSX protein XepA (xepA), found in Bacillus subtilis (strain 168).